Reading from the N-terminus, the 858-residue chain is MSSSLYHPRPVLSSQRYTPSPDYLQDARRTYHDNSRLPLRETASNAQSHNFNSMVPCYSSQVGISPSVPASLPAPMIPSQSFECLYRVPTPRNQPRFQQRRPRNEVNPLYFWPAFRQYRNRQAHKDTQKDKGGVWRRPELEDAFVDSVLLMPHMGRRKFSMGGKLHGRNMLISEYIFTICVAILGSKEIFRIDNSNDSIEQMGRKQVSSHMQVVKKFFEDLRCFHFLFPAEEKKEPGSTNSDDYYDEEEQESFKSNPVLTALAEGRVPDVKPNYEYFSQLLALQSLISVRPKTAEVYVSSSEVKFRDEIAYDAQDAPLDTESFPHLNKYNNCDDSPSVLGKDVLLHEYTRSLDRTTSACVKTVTRRWQKDAPEIYETLELPTRDEECLLLEMCATLELHEHARFPSGSELTGFVEVAITNPNLQSHRWKCVTRLTRPSELHSDDKKSSVYTNETGIHRRGCSDSKPDCDCHSRPRQDIHVPFPAVEWASILSMAVQYPDVEHQRKKEKRTKGDDRKNLDRAGSKRKRSEDDGDAASWARRDLTGSDLICKVAMYQELWSCAPDSNRWVRQGIVFWRFNTTNQWYKYNPVFKPAGTSWRWLTVNDPMSRYHQQKALVYPSASMSLDSIMSPTPSINQHMTAAMNETFSSAWDPSVSLAQVPNATATNNGLTLFESFSGGLATPPPTAGLQGSYSGSFDHGMPPSTGVGFIPSTCSTAGESHPGTGHGHSHSAAYYDAQTTLADLKPVMSTVNPYQSPTTSSGLDLSSSLVYDNAECDTGLQGWDMPALDGWSTGAGSGSEWGSHHKVEPSSDQTALWTQSQWAQMAGDRDGSPRPMKRRRGDGIDSHIPPTMTAAAGGW.

Positions 1–22 (MSSSLYHPRPVLSSQRYTPSPD) are disordered. The TEA DNA-binding region spans 128-221 (QKDKGGVWRR…QVVKKFFEDL (94 aa)). Residues 500–522 (VEHQRKKEKRTKGDDRKNLDRAG) are compositionally biased toward basic and acidic residues. Disordered stretches follow at residues 500-535 (VEHQ…GDAA) and 792-858 (TGAG…AGGW). The Nuclear localization signal motif lies at 514 to 521 (DRKNLDRA). Positions 809–822 (SSDQTALWTQSQWA) are enriched in polar residues.

Belongs to the TEC1 family.

Its subcellular location is the nucleus. AbaA and wetA are pivotal regulators of conidiophore development and conidium maturation. They act individually and together to regulate their own expression and that of numerous other sporulation-specific genes. Binds to the sequence 5'-CATTCY-3', where Y is a pyrimidine, making both major- and minor-groove contacts. Plays a pivotal role in conidiation by regulating cell cycle pathways and other conidiation-related genes. The chain is Conidiophore development regulator abaA from Gibberella zeae (strain ATCC MYA-4620 / CBS 123657 / FGSC 9075 / NRRL 31084 / PH-1) (Wheat head blight fungus).